The primary structure comprises 647 residues: RalBP1-associated Eps domain-containing protein 2 (647 aa).

The 102-residue stretch at 21-122 folds into the EH 1 domain; that stretch reads EQQCYSELFA…RTESIKCELP (102 aa). Residues 156–233 are disordered; that stretch reads EKNSFKRMDN…PSSEGPGAKP (78 aa). Over residues 158-170 the composition is skewed to basic and acidic residues; sequence NSFKRMDNEDKQE. Low complexity predominate over residues 221–230; it reads PEGPSSEGPG. S239 is subject to Phosphoserine. The region spanning 268 to 359 is the EH 2 domain; sequence QREYYVNQFR…LQPEYLQAAF (92 aa). Residues 301–336 form the EF-hand domain; it reads LSIPELSYIWELSDADCDGALTLSEFCAAFHLIVAR. Ca(2+) contacts are provided by D314, D316, D318, and E325. Positions 402-478 are disordered; sequence PTQDVTTADD…PRPQKTHSRA (77 aa). T466 is modified (phosphothreonine). Position 480 is a phosphoserine (S480). The tract at residues 492–568 is disordered; that stretch reads PAANSGLLPP…PENQTTESQE (77 aa). Over residues 499-510 the composition is skewed to pro residues; that stretch reads LPPPPALPPRPC. Positions 501 to 647 are interaction with RALBP1; sequence PPPALPPRPC…LEQLRPVTVL (147 aa). The segment covering 524–539 has biased composition (polar residues); it reads SQLNRAPSQAAESSPT. Residues 548–647 are interaction with ASAP1; the sequence is PPSKPIRRKF…LEQLRPVTVL (100 aa). Residues 599–640 adopt a coiled-coil conformation; the sequence is IQTAIRKNKEANAVLARLNSELQQQLKEVHQERIALENQLEQ.

As to quaternary structure, interacts with EPN1. Interacts with EPS15 AND EPS15L1. Interacts with RALBP1; can form a ternary complex with activated Ral (RALA or RALB). Interacts with ASAP1; the interaction is direct and this complex can bind paxillin. Also forms a ternary complex with RALBP1 and ASAP1. Interacts with GRB2. Post-translationally, tyrosine-phosphorylated upon stimulation of cells with EGF. Phosphorylation on Tyr-residues induces its association with the EGF receptor probably indirectly through an adapter like GRB2.

The protein localises to the cytoplasm. Its function is as follows. Involved in ligand-dependent receptor mediated endocytosis of the EGF and insulin receptors as part of the Ral signaling pathway. By controlling growth factor receptors endocytosis may regulate cell survival. Through ASAP1 may regulate cell adhesion and migration. This is RalBP1-associated Eps domain-containing protein 2 (Reps2) from Mus musculus (Mouse).